A 328-amino-acid polypeptide reads, in one-letter code: Phenylalanine--tRNA ligase alpha subunit (328 aa).

E245 is a binding site for Mg(2+).

It belongs to the class-II aminoacyl-tRNA synthetase family. Phe-tRNA synthetase alpha subunit type 1 subfamily. In terms of assembly, tetramer of two alpha and two beta subunits. It depends on Mg(2+) as a cofactor.

It localises to the cytoplasm. The catalysed reaction is tRNA(Phe) + L-phenylalanine + ATP = L-phenylalanyl-tRNA(Phe) + AMP + diphosphate + H(+). This is Phenylalanine--tRNA ligase alpha subunit from Helicobacter pylori (strain Shi470).